The primary structure comprises 292 residues: Poly(U)-specific endoribonuclease-B (292 aa).

In terms of domain architecture, EndoU spans 8-285 (VNHELSKLFN…IGTAYPALLS (278 aa)). Catalysis depends on residues His-162, His-178, and Lys-224.

This sequence belongs to the ENDOU family. As to quaternary structure, monomer. Requires Mn(2+) as cofactor.

The protein localises to the nucleus. It carries out the reaction uridylyl-uridylyl-ribonucleotide-RNA = a 3'-end uridylyl-2',3'-cyclophospho-uridine-RNA + a 5'-end dephospho-ribonucleoside-RNA. Poly(U)-specific endoribonuclease involved in the processing of intron-encoded box C/D snoRNAs, such as U16 and U86. Releases products that have 2',3'-cyclic phosphate termini at the 3'-end. The protein is Poly(U)-specific endoribonuclease-B (endou-b) of Xenopus laevis (African clawed frog).